The primary structure comprises 413 residues: Cardiolipin synthase B (413 aa).

PLD phosphodiesterase domains are found at residues isoleucine 108 to histidine 135 and arginine 285 to serine 312. Active-site residues include histidine 113, lysine 115, aspartate 120, histidine 290, lysine 292, and aspartate 297. The tract at residues alanine 388 to proline 413 is disordered.

This sequence belongs to the phospholipase D family. Cardiolipin synthase subfamily. ClsB sub-subfamily.

It is found in the cell membrane. The enzyme catalyses 2 a 1,2-diacyl-sn-glycero-3-phospho-(1'-sn-glycerol) = a cardiolipin + glycerol. In terms of biological role, catalyzes the phosphatidyl group transfer from one phosphatidylglycerol molecule to another to form cardiolipin (CL) (diphosphatidylglycerol) and glycerol. This Salmonella typhi protein is Cardiolipin synthase B.